Here is a 378-residue protein sequence, read N- to C-terminus: Odorant receptor 33a (378 aa).

At methionine 1 to arginine 33 the chain is on the cytoplasmic side. Residues leucine 34–glycine 54 form a helical membrane-spanning segment. Topologically, residues methionine 55–glutamine 62 are extracellular. Residues valine 63–phenylalanine 83 traverse the membrane as a helical segment. Topologically, residues arginine 84–serine 127 are cytoplasmic. The chain crosses the membrane as a helical span at residues tyrosine 128–glycine 148. The Extracellular portion of the chain corresponds to arginine 149 to alanine 163. The helical transmembrane segment at threonine 164 to leucine 184 threads the bilayer. Residues glutamate 185 to glutamine 254 are Cytoplasmic-facing. The chain crosses the membrane as a helical span at residues leucine 255–phenylalanine 275. Residues alanine 276–tyrosine 285 are Extracellular-facing. A helical membrane pass occupies residues alanine 286–methionine 306. The Cytoplasmic portion of the chain corresponds to threonine 307–aspartate 355. Residues methionine 356 to phenylalanine 376 traverse the membrane as a helical segment. Residues arginine 377–valine 378 lie on the Extracellular side of the membrane.

The protein belongs to the insect chemoreceptor superfamily. Heteromeric odorant receptor channel (TC 1.A.69) family. Or2a subfamily. In terms of assembly, interacts with Orco. Complexes exist early in the endomembrane system in olfactory sensory neurons (OSNs), coupling these complexes to the conserved ciliary trafficking pathway. Expressed in 1-2 cells on the distal edge of the antenna but not the maxillary palp.

It localises to the cell membrane. Odorant receptor which mediates acceptance or avoidance behavior, depending on its substrates. The odorant receptor repertoire encodes a large collection of odor stimuli that vary widely in identity, intensity, and duration. May form a complex with Orco to form odorant-sensing units, providing sensitive and prolonged odorant signaling and calcium permeability. The sequence is that of Odorant receptor 33a (Or33a) from Drosophila melanogaster (Fruit fly).